Reading from the N-terminus, the 317-residue chain is tRNA dimethylallyltransferase (317 aa).

Residue 16-23 (GPTASGKS) participates in ATP binding. 18–23 (TASGKS) lines the substrate pocket. 3 interaction with substrate tRNA regions span residues 41-44 (DSAQ), 165-169 (QRIQR), and 247-252 (RCVGYR).

Belongs to the IPP transferase family. In terms of assembly, monomer. Mg(2+) serves as cofactor.

The enzyme catalyses adenosine(37) in tRNA + dimethylallyl diphosphate = N(6)-dimethylallyladenosine(37) in tRNA + diphosphate. Catalyzes the transfer of a dimethylallyl group onto the adenine at position 37 in tRNAs that read codons beginning with uridine, leading to the formation of N6-(dimethylallyl)adenosine (i(6)A). The protein is tRNA dimethylallyltransferase of Nitrosomonas eutropha (strain DSM 101675 / C91 / Nm57).